Here is a 251-residue protein sequence, read N- to C-terminus: HTH-type transcriptional regulator UlaR (251 aa).

Residues 3 to 58 (EAQRHQILLEMLAQLGFVTVEKVVERLGISPATARRDINKLDERGKLKKVRNGAEA) form the HTH deoR-type domain. Positions 20 to 39 (VTVEKVVERLGISPATARRD) form a DNA-binding region, H-T-H motif.

The protein localises to the cytoplasm. Its function is as follows. Represses ulaG and the ulaABCDEF operon. The polypeptide is HTH-type transcriptional regulator UlaR (Shigella sonnei (strain Ss046)).